The following is an 80-amino-acid chain: Clavanin-D (80 aa).

An N-terminal signal peptide occupies residues 1–19 (MKTTILILLILGLGINAKS). Positions 20–29 (LEERKSEEEK) are excised as a propeptide. Residue Phe-52 is modified to Phenylalanine amide. The propeptide occupies 54 to 80 (DDQQDNGKFYGHYAEDNGKHWYDTGDQ).

As to expression, hemocytes and pharyngeal tissues.

The protein resides in the secreted. In terms of biological role, has antimicrobial activity against E.coli, L.monocytogenes and C.albicans. This Styela clava (Sea squirt) protein is Clavanin-D.